A 415-amino-acid chain; its full sequence is Fructose-like permease IIC component (415 aa).

The Cytoplasmic portion of the chain corresponds to Met-1–Met-46. A PTS EIIC type-2 domain is found at Leu-35 to Leu-415. A helical membrane pass occupies residues Val-47–Trp-67. Residues Leu-68–Ser-101 lie on the Periplasmic side of the membrane. The helical transmembrane segment at Phe-102 to Ile-122 threads the bilayer. At Gly-123 to Leu-126 the chain is on the cytoplasmic side. A helical transmembrane segment spans residues Ala-127–Phe-147. The Periplasmic segment spans residues Asp-148 to Ser-157. A helical transmembrane segment spans residues Ser-158–Val-178. Residues Lys-179–Thr-197 are Cytoplasmic-facing. The helical transmembrane segment at Phe-198–Pro-218 threads the bilayer. Topologically, residues Phe-219–Lys-237 are periplasmic. Residues Gly-238–Ile-258 form a helical membrane-spanning segment. Residues Asn-259–Pro-276 are Cytoplasmic-facing. Residues Val-277–Ile-297 form a helical membrane-spanning segment. At Asp-298–Ala-318 the chain is on the periplasmic side. The chain crosses the membrane as a helical span at residues Met-319–Ile-339. Topologically, residues Thr-340 to Ala-341 are cytoplasmic. Residues Ile-342–Val-362 form a helical membrane-spanning segment. At Gln-363–Asn-378 the chain is on the periplasmic side. The chain crosses the membrane as a helical span at residues Leu-379–Phe-399. Topologically, residues Leu-400–Leu-415 are cytoplasmic.

Its subcellular location is the cell inner membrane. The phosphoenolpyruvate-dependent sugar phosphotransferase system (PTS), a major carbohydrate active -transport system, catalyzes the phosphorylation of incoming sugar substrates concomitant with their translocation across the cell membrane. The protein is Fructose-like permease IIC component (fryC) of Shigella flexneri.